A 455-amino-acid chain; its full sequence is tRNA modification GTPase MnmE (455 aa).

(6S)-5-formyl-5,6,7,8-tetrahydrofolate-binding residues include arginine 24, glutamate 81, and lysine 120. A TrmE-type G domain is found at 216–378 (GMTVVIAGRP…LREHLKACMG (163 aa)). Asparagine 226 contacts K(+). GTP is bound by residues 226-231 (NAGKSS), 245-251 (TDIAGTT), 270-273 (DTAG), 335-338 (NKAD), and 359-361 (SAR). Mg(2+) is bound at residue serine 230. Residues threonine 245, isoleucine 247, and threonine 250 each contribute to the K(+) site. Threonine 251 is a Mg(2+) binding site. A (6S)-5-formyl-5,6,7,8-tetrahydrofolate-binding site is contributed by lysine 455.

The protein belongs to the TRAFAC class TrmE-Era-EngA-EngB-Septin-like GTPase superfamily. TrmE GTPase family. As to quaternary structure, homodimer. Heterotetramer of two MnmE and two MnmG subunits. It depends on K(+) as a cofactor.

The protein resides in the cytoplasm. Its function is as follows. Exhibits a very high intrinsic GTPase hydrolysis rate. Involved in the addition of a carboxymethylaminomethyl (cmnm) group at the wobble position (U34) of certain tRNAs, forming tRNA-cmnm(5)s(2)U34. The protein is tRNA modification GTPase MnmE of Pseudomonas paraeruginosa (strain DSM 24068 / PA7) (Pseudomonas aeruginosa (strain PA7)).